We begin with the raw amino-acid sequence, 160 residues long: SsrA-binding protein (160 aa).

Residues 133-160 (KKEHDKREDLKEREWQRDKERMMKNKGR) are disordered.

Belongs to the SmpB family.

It is found in the cytoplasm. Required for rescue of stalled ribosomes mediated by trans-translation. Binds to transfer-messenger RNA (tmRNA), required for stable association of tmRNA with ribosomes. tmRNA and SmpB together mimic tRNA shape, replacing the anticodon stem-loop with SmpB. tmRNA is encoded by the ssrA gene; the 2 termini fold to resemble tRNA(Ala) and it encodes a 'tag peptide', a short internal open reading frame. During trans-translation Ala-aminoacylated tmRNA acts like a tRNA, entering the A-site of stalled ribosomes, displacing the stalled mRNA. The ribosome then switches to translate the ORF on the tmRNA; the nascent peptide is terminated with the 'tag peptide' encoded by the tmRNA and targeted for degradation. The ribosome is freed to recommence translation, which seems to be the essential function of trans-translation. The sequence is that of SsrA-binding protein from Tolumonas auensis (strain DSM 9187 / NBRC 110442 / TA 4).